The chain runs to 125 residues: Glycine cleavage system H protein (125 aa).

The region spanning 22 to 103 (VFVVGITENA…AFTAWIFKIK (82 aa)) is the Lipoyl-binding domain. N6-lipoyllysine is present on Lys63.

This sequence belongs to the GcvH family. As to quaternary structure, the glycine cleavage system is composed of four proteins: P, T, L and H. It depends on (R)-lipoate as a cofactor.

Functionally, the glycine cleavage system catalyzes the degradation of glycine. The H protein shuttles the methylamine group of glycine from the P protein to the T protein. This chain is Glycine cleavage system H protein, found in Bordetella avium (strain 197N).